A 219-amino-acid chain; its full sequence is Outer spore wall protein 4 (219 aa).

The first 19 residues, 1–19 (MRFQLFIYFYFTIVVIAGT), serve as a signal peptide directing secretion. Residues 20–170 (NTIQQFSDAG…KKKRLDRIKR (151 aa)) lie on the Extracellular side of the membrane. 3 N-linked (GlcNAc...) asparagine glycosylation sites follow: asparagine 42, asparagine 62, and asparagine 136. The chain crosses the membrane as a helical span at residues 171-191 (ILTVSLLELGLAQGVADLCAV). Topologically, residues 192-193 (AP) are cytoplasmic. A helical membrane pass occupies residues 194 to 214 (FACLLGVTVGSIGFIFWLALI). The Extracellular portion of the chain corresponds to 215-219 (YNAIQ).

The protein belongs to the OSW4/6 family. In terms of processing, N-glycosylated.

It localises to the membrane. Involved in spore wall assembly. May be involved in maintaining genome integrity. This Saccharomyces cerevisiae (strain ATCC 204508 / S288c) (Baker's yeast) protein is Outer spore wall protein 4.